Here is a 311-residue protein sequence, read N- to C-terminus: MLSPIILFLSIIIDRIFGELPEKIHPTVWIGNIISFFEKILKSTHSKNKYKDFIFGTLTTISVLFIVFGAIYGVEILINNIQNIYIKYIVYSFLISTTIGYKSLLQFSKTPLNHIKNKDIESAKKSVQCIVSRNTDKLDTKHILSASIESASENITDSIIAPLFYAIFFGLEGAFIYRAINTMDAMLGYRNKKYEYYGKLPAILDDIANFIPSRISGILLVLFAPLYGGNIKKALNGFIKEGHKTPSPNSGYTMAVMANSLNMTLEKIGYYKLGNGEITLKKAYNSLFSIDVVIFSFIVLYSIYYVIFYYF.

A run of 4 helical transmembrane segments spans residues 53 to 73 (FIFG…AIYG), 76 to 96 (ILIN…FLIS), 157 to 177 (DSII…AFIY), and 288 to 308 (FSID…YVIF).

Belongs to the CobD/CbiB family.

The protein localises to the cell membrane. Its pathway is cofactor biosynthesis; adenosylcobalamin biosynthesis. Its function is as follows. Converts cobyric acid to cobinamide by the addition of aminopropanol on the F carboxylic group. This chain is Probable cobalamin biosynthesis protein CobD, found in Methanococcus aeolicus (strain ATCC BAA-1280 / DSM 17508 / OCM 812 / Nankai-3).